A 541-amino-acid polypeptide reads, in one-letter code: Zinc finger protein 513 (541 aa).

Residues 1 to 120 (MPRRKQSHPQ…ARGERPGPAC (120 aa)) are disordered. The span at 44–55 (LEFEEEEEEEEG) shows a compositional bias: acidic residues. Phosphoserine is present on residues Ser85 and Ser96. Residues 103–115 (EPARGPGEARGER) are compositionally biased toward basic and acidic residues. 8 C2H2-type zinc fingers span residues 150 to 172 (YSCRLCAFVSHYSSHLKRHMQTH), 178 to 200 (FRCGRCPYASAQLVNLTRHTRTH), 206 to 228 (YRCPHCPFACSSLGNLRRHQRTH), 360 to 382 (FACSLCPFATHYPNHLARHMKTH), 388 to 410 (FRCARCPYASAHLDNLKRHQRVH), 416 to 438 (YKCPLCPYACGNLANLKRHGRIH), 444 to 466 (FRCSLCNYSCNQSMNLKRHMLRH), and 472 to 494 (FRCATCAYTTGHWDNYKRHQKVH). A disordered region spans residues 492 to 541 (KVHGHGGAGGPGLSAPEGWAPPHSPPSVLSTRGSAALGATGSRALHTDSP).

The protein belongs to the krueppel C2H2-type zinc-finger protein family. As to quaternary structure, binds DNA. Can associate with the proximal promoter regions of PAX6 and SP4, and their known targets including ARR3, RHO, OPN1MW2 and OPN1SW.

The protein localises to the nucleus. Functionally, transcriptional regulator that plays a role in retinal development and maintenance. This is Zinc finger protein 513 (Znf513) from Rattus norvegicus (Rat).